The sequence spans 123 residues: Small ribosomal subunit protein uS12 (123 aa).

Aspartate 89 is subject to 3-methylthioaspartic acid. Residues 101 to 123 (SLDTSGVKDRKQGRSKYGAKRPK) form a disordered region. The segment covering 113–123 (GRSKYGAKRPK) has biased composition (basic residues).

This sequence belongs to the universal ribosomal protein uS12 family. Part of the 30S ribosomal subunit. Contacts proteins S8 and S17. May interact with IF1 in the 30S initiation complex.

In terms of biological role, with S4 and S5 plays an important role in translational accuracy. Functionally, interacts with and stabilizes bases of the 16S rRNA that are involved in tRNA selection in the A site and with the mRNA backbone. Located at the interface of the 30S and 50S subunits, it traverses the body of the 30S subunit contacting proteins on the other side and probably holding the rRNA structure together. The combined cluster of proteins S8, S12 and S17 appears to hold together the shoulder and platform of the 30S subunit. This chain is Small ribosomal subunit protein uS12, found in Azotobacter vinelandii (strain DJ / ATCC BAA-1303).